A 209-amino-acid polypeptide reads, in one-letter code: D-aminoacyl-tRNA deacylase 1 (209 aa).

Positions 4, 6, and 28 each coordinate Mg(2+). Positions 139 to 140 (GP) match the Gly-cisPro motif, important for rejection of L-amino acids motif. The segment at 142-209 (TIELESPAPG…EGDVSSEREP (68 aa)) is disordered. Composition is skewed to basic and acidic residues over residues 159–170 (QLSKLEKQQQRK) and 181–194 (SSKE…EDRS). A phosphoserine mark is found at Ser197, Ser204, and Ser205.

It belongs to the DTD family. In terms of assembly, homodimer. Interacts with CDC45 and TOPBP1. Preferentially phosphorylated in cells arrested early in S phase. Phosphorylation in the C-terminus weakens the interaction with CDC45. As to expression, expressed in many adult and fetal tissues. Highest levels in testis, ovary, spleen and in adult and fetal brain.

The protein resides in the nucleus. It localises to the cytoplasm. The catalysed reaction is glycyl-tRNA(Ala) + H2O = tRNA(Ala) + glycine + H(+). It carries out the reaction a D-aminoacyl-tRNA + H2O = a tRNA + a D-alpha-amino acid + H(+). Functionally, possible ATPase involved in DNA replication, may facilitate loading of CDC45 onto pre-replication complexes. In terms of biological role, an aminoacyl-tRNA editing enzyme that deacylates mischarged D-aminoacyl-tRNAs. Also deacylates mischarged glycyl-tRNA(Ala), protecting cells against glycine mischarging by AlaRS. Acts via tRNA-based rather than protein-based catalysis; rejects L-amino acids rather than detecting D-amino acids in the active site. By recycling D-aminoacyl-tRNA to D-amino acids and free tRNA molecules, this enzyme counteracts the toxicity associated with the formation of D-aminoacyl-tRNA entities in vivo and helps enforce protein L-homochirality. This chain is D-aminoacyl-tRNA deacylase 1 (DTD1), found in Homo sapiens (Human).